Reading from the N-terminus, the 89-residue chain is Large ribosomal subunit protein eL34 (89 aa).

Belongs to the eukaryotic ribosomal protein eL34 family.

In Methanococcus maripaludis (strain C6 / ATCC BAA-1332), this protein is Large ribosomal subunit protein eL34.